The primary structure comprises 972 residues: MKANKLSAITLCILGYAHTVYAESNMQTEKLETIVVSSEDDSVHNKNVGEIKKNAKALSKQQVQDSRDLVRYETGVTVVEKGRFGSSGYAIRGVDENRVAVVVDGLHQAETISSQGFKELFEGYGNFNNTRNGVEVENLKQAVIQKGADAIRTGSGSLGGTVSFESKDARDYLIDKNYHFGYKTGYSSADNQKLHSVTAAGRYSDFDLLAVHTQRHGNELRNYGYRHYDGSVVRKEREKADPYKITKQSSLIKIGYQLNDTNRFTLGYDDSRNTSRGTDWSNAFTSYNGGPFLKDVRHTNDQSNRKNISFVYENFDTNDFWDTLKITHNHQKIKLKARLDEYCDVNGEIDCPAIANPSGLYINDKGIFLDKHDGEITHKKEGEFNNYFDSKGKEVRVKGFNVDSILINCDQYDCSKPMQLLSSTNNGYGGSPNKYIYKTYELFEKTMNNGNGKYAVLEIRSSGHEKFSRVYLPSEKGYVENQWKDRDLNTDTQQYNIDLTKSFKLKSVEHNATYGGLYSEVKKSMTNRAGYEAYNRQWWANIFFGKENNKPNKCQPYNGNSFTTLCSHEDRLFSFLIPVKTKTGALYVTDKIKLNDKVNLDVAYRYDRIKHDPKYIPGTTPKLPTDLILGRFIEFKPKNTYATQDEKNENAEKNAVYLASKKTKFSANSYSATFSFDPMDFLKIQAKYATGFRAPTSDEIYFVFQHPSFSIYPNLYLKAERSKNKEVAITLHKQKSFLTVNLFQTDYKDFLDLAYLKKGSLPYGNGGSQLETLLYQNVNRDKARVKGLEVNSKLHLGDVWRTLDGFNLSYKLSLQKGRMSSKVGEEGKQRDTNKLDTPMNAIQPQTHVVGVGYEHPQEKFGVDMYLTHASAKKEKDTFNMFYDGKDQKDQHIKWRSDRYTLVDLIAYVKPVKNVTLRAGVYNLTNREYGTWDSIRSIRPFGTTNLINQETGKGIKRFNAPGRNFRVNAEITF.

Positions 1–22 (MKANKLSAITLCILGYAHTVYA) are cleaved as a signal peptide. The TonB box signature appears at 32 to 39 (ETIVVSSE). The 130-residue stretch at 38 to 167 (SEDDSVHNKN…LGGTVSFESK (130 aa)) folds into the TBDR plug domain. Residues 175–972 (DKNYHFGYKT…NFRVNAEITF (798 aa)) enclose the TBDR beta-barrel domain. The TonB C-terminal box signature appears at 955 to 972 (KRFNAPGRNFRVNAEITF).

The protein belongs to the TonB-dependent receptor family. Hemoglobin/haptoglobin binding protein subfamily.

The protein resides in the cell outer membrane. Acts as a receptor for hemoglobin or the hemoglobin/haptoglobin complex of the host and is required for heme uptake. May be involved in virulence. The sequence is that of Hemoglobin and hemoglobin-haptoglobin-binding protein from Haemophilus ducreyi (strain 35000HP / ATCC 700724).